The sequence spans 357 residues: UDP-N-acetylglucosamine--N-acetylmuramyl-(pentapeptide) pyrophosphoryl-undecaprenol N-acetylglucosamine transferase (357 aa).

UDP-N-acetyl-alpha-D-glucosamine-binding positions include 10–12 (TGG), asparagine 124, serine 189, isoleucine 244, and glutamine 289.

Belongs to the glycosyltransferase 28 family. MurG subfamily.

It is found in the cell membrane. The enzyme catalyses Mur2Ac(oyl-L-Ala-gamma-D-Glu-L-Lys-D-Ala-D-Ala)-di-trans,octa-cis-undecaprenyl diphosphate + UDP-N-acetyl-alpha-D-glucosamine = beta-D-GlcNAc-(1-&gt;4)-Mur2Ac(oyl-L-Ala-gamma-D-Glu-L-Lys-D-Ala-D-Ala)-di-trans,octa-cis-undecaprenyl diphosphate + UDP + H(+). It participates in cell wall biogenesis; peptidoglycan biosynthesis. In terms of biological role, cell wall formation. Catalyzes the transfer of a GlcNAc subunit on undecaprenyl-pyrophosphoryl-MurNAc-pentapeptide (lipid intermediate I) to form undecaprenyl-pyrophosphoryl-MurNAc-(pentapeptide)GlcNAc (lipid intermediate II). The sequence is that of UDP-N-acetylglucosamine--N-acetylmuramyl-(pentapeptide) pyrophosphoryl-undecaprenol N-acetylglucosamine transferase from Lactococcus lactis subsp. cremoris (strain MG1363).